A 256-amino-acid polypeptide reads, in one-letter code: 5'-nucleotidase SurE (256 aa).

Residues Asp-9, Asp-10, Ser-42, and Asn-95 each coordinate a divalent metal cation.

Belongs to the SurE nucleotidase family. Requires a divalent metal cation as cofactor.

It localises to the cytoplasm. The enzyme catalyses a ribonucleoside 5'-phosphate + H2O = a ribonucleoside + phosphate. Its function is as follows. Nucleotidase that shows phosphatase activity on nucleoside 5'-monophosphates. The protein is 5'-nucleotidase SurE of Campylobacter curvus (strain 525.92).